We begin with the raw amino-acid sequence, 292 residues long: Fat storage-inducing transmembrane protein 1 (292 aa).

Residues M1–R18 are Lumenal-facing. Residues A19–G39 traverse the membrane as a helical segment. The Cytoplasmic portion of the chain corresponds to S40–R54. Residues L55–N75 traverse the membrane as a helical segment. The Lumenal portion of the chain corresponds to S76–S94. A helical transmembrane segment spans residues A95–T115. At R116–A141 the chain is on the cytoplasmic side. A helical membrane pass occupies residues F142 to L162. The Lumenal segment spans residues H163–T187. H186 is a catalytic residue. Residues F188–L208 form a helical membrane-spanning segment. Over A209–L220 the chain is Cytoplasmic. A helical transmembrane segment spans residues V221–I241. The Lumenal segment spans residues Y242–K249. H244 is a catalytic residue. Residues V250–Q270 traverse the membrane as a helical segment. Over P271 to N292 the chain is Cytoplasmic.

This sequence belongs to the FIT family. FIT1 subfamily. Predominantly expressed in skeletal muscle and at lower levels in the heart (at protein level). In the heart, mRNA expression levels do not correlate well with protein levels, suggesting post-transcriptional regulation in this organ.

Its subcellular location is the endoplasmic reticulum membrane. In terms of biological role, plays an important role in the formation of lipid droplets (LDs) which are storage organelles at the center of lipid and energy homeostasis. Directly binds to diacylglycerol (DAGs) and triacylglycerol. The polypeptide is Fat storage-inducing transmembrane protein 1 (Mus musculus (Mouse)).